Reading from the N-terminus, the 105-residue chain is Large ribosomal subunit protein uL24 (105 aa).

It belongs to the universal ribosomal protein uL24 family. As to quaternary structure, part of the 50S ribosomal subunit.

Functionally, one of two assembly initiator proteins, it binds directly to the 5'-end of the 23S rRNA, where it nucleates assembly of the 50S subunit. Its function is as follows. One of the proteins that surrounds the polypeptide exit tunnel on the outside of the subunit. The sequence is that of Large ribosomal subunit protein uL24 from Nitrosospira multiformis (strain ATCC 25196 / NCIMB 11849 / C 71).